A 70-amino-acid polypeptide reads, in one-letter code: DNA gyrase inhibitor YacG (70 aa).

The Zn(2+) site is built by Cys9, Cys12, Cys28, and Cys32. Positions Glu43–Gln70 are disordered.

This sequence belongs to the DNA gyrase inhibitor YacG family. Interacts with GyrB. Zn(2+) is required as a cofactor.

Inhibits all the catalytic activities of DNA gyrase by preventing its interaction with DNA. Acts by binding directly to the C-terminal domain of GyrB, which probably disrupts DNA binding by the gyrase. This Legionella pneumophila (strain Corby) protein is DNA gyrase inhibitor YacG.